Here is a 423-residue protein sequence, read N- to C-terminus: MISRKIISTINSKTFYNKSLSYCTVNNNKNTTININNNNEKPKIKTGILMLNLGGPSKLEEVEPFLTRLFTDKEIFKLPFQKYTGTLIAKRRSNAVMKLYEAIGGGSPIRKWTEKQGELLSSMMDKISPETAPHKHYIGFRYSDPLIADTLDQMENDNVERVVAFSQYPQYSCTTTGSSLNNLWKTLEEKQMQSKFKWSVIDRWQDHKGFIDATIHKIKKAYNQFNSKLRELDIDDVDANNNNNNNKPVLVFSAHSLPMSTVEKGDPYPQEVAETVCRVMDGLGIRDEETGKPLEYILAWQSKVGPLPWLSPKTSFVIEQLAKKGRNAIVIPIAFTSDHIETLSEIDIELQHLAKKCGMKLLVRSESLNDDPLIISAMADLVNTHLKSNKTIHSNQYHLKCPGCKDDSTFCRTISNPIQALKL.

The transit peptide at 1–29 (MISRKIISTINSKTFYNKSLSYCTVNNNK) directs the protein to the mitochondrion. C173 contacts [2Fe-2S] cluster. Residues H207 and D380 contribute to the active site. [2Fe-2S] cluster-binding residues include C401, C404, and C411.

Belongs to the ferrochelatase family. In terms of assembly, monomer. It depends on [2Fe-2S] cluster as a cofactor.

The protein resides in the mitochondrion inner membrane. It catalyses the reaction heme b + 2 H(+) = protoporphyrin IX + Fe(2+). Its pathway is porphyrin-containing compound metabolism; protoheme biosynthesis; protoheme from protoporphyrin-IX: step 1/1. Functionally, catalyzes the ferrous insertion into protoporphyrin IX. The chain is Ferrochelatase, mitochondrial (hemH) from Dictyostelium discoideum (Social amoeba).